The chain runs to 799 residues: Elongation factor G, mitochondrial (799 aa).

The transit peptide at 1 to 24 (MRCPSLARLPHRAVSGLTRTPVRF) directs the protein to the mitochondrion. The region spanning 97–384 (SRVRNIGIAA…GVIDYLPNPS (288 aa)) is the tr-type G domain. Residues 106–113 (AHIDSGKT), 182–186 (DTPGH), and 236–239 (NKMD) each bind GTP.

It belongs to the TRAFAC class translation factor GTPase superfamily. Classic translation factor GTPase family. EF-G/EF-2 subfamily.

The protein localises to the mitochondrion. Its pathway is protein biosynthesis; polypeptide chain elongation. In terms of biological role, mitochondrial GTPase that catalyzes the GTP-dependent ribosomal translocation step during translation elongation. During this step, the ribosome changes from the pre-translocational (PRE) to the post-translocational (POST) state as the newly formed A-site-bound peptidyl-tRNA and P-site-bound deacylated tRNA move to the P and E sites, respectively. Catalyzes the coordinated movement of the two tRNA molecules, the mRNA and conformational changes in the ribosome. This is Elongation factor G, mitochondrial (mef1) from Emericella nidulans (strain FGSC A4 / ATCC 38163 / CBS 112.46 / NRRL 194 / M139) (Aspergillus nidulans).